A 511-amino-acid chain; its full sequence is 2-isopropylmalate synthase (511 aa).

The Pyruvate carboxyltransferase domain occupies I4–Y266. Mn(2+) is bound by residues D13, H201, H203, and N237. The segment at V391–N511 is regulatory domain.

Belongs to the alpha-IPM synthase/homocitrate synthase family. LeuA type 1 subfamily. Homodimer. Mn(2+) is required as a cofactor.

The protein resides in the cytoplasm. It carries out the reaction 3-methyl-2-oxobutanoate + acetyl-CoA + H2O = (2S)-2-isopropylmalate + CoA + H(+). Its pathway is amino-acid biosynthesis; L-leucine biosynthesis; L-leucine from 3-methyl-2-oxobutanoate: step 1/4. Catalyzes the condensation of the acetyl group of acetyl-CoA with 3-methyl-2-oxobutanoate (2-ketoisovalerate) to form 3-carboxy-3-hydroxy-4-methylpentanoate (2-isopropylmalate). The polypeptide is 2-isopropylmalate synthase (Acetivibrio thermocellus (strain ATCC 27405 / DSM 1237 / JCM 9322 / NBRC 103400 / NCIMB 10682 / NRRL B-4536 / VPI 7372) (Clostridium thermocellum)).